A 232-amino-acid polypeptide reads, in one-letter code: Putative N-acetylmannosamine-6-phosphate 2-epimerase (232 aa).

This sequence belongs to the NanE family.

The catalysed reaction is an N-acyl-D-glucosamine 6-phosphate = an N-acyl-D-mannosamine 6-phosphate. It functions in the pathway amino-sugar metabolism; N-acetylneuraminate degradation; D-fructose 6-phosphate from N-acetylneuraminate: step 3/5. Its function is as follows. Converts N-acetylmannosamine-6-phosphate (ManNAc-6-P) to N-acetylglucosamine-6-phosphate (GlcNAc-6-P). This is Putative N-acetylmannosamine-6-phosphate 2-epimerase from Borreliella afzelii (strain PKo) (Borrelia afzelii).